A 373-amino-acid polypeptide reads, in one-letter code: Superinfection exclusion protein (373 aa).

Residues 1-15 (MIVLLILSLACTAFT) form the signal peptide.

Belongs to the serpin family. Orthopoxvirus OPG040 subfamily. As to quaternary structure, interacts with A56 protein.

It is found in the virion membrane. It localises to the host cell membrane. Its function is as follows. Prevents cell to cell fusion via its interaction with A56 protein. The A56-K2 complex associates with components of the entry fusion complex (EFC) presumably to avoid superinfection and syncytium formation. In Homo sapiens (Human), this protein is Superinfection exclusion protein (OPG040).